We begin with the raw amino-acid sequence, 108 residues long: MLYPIFIFILAGLCEIGGGYLIWLWLREGQSSLVGLIGGVILMLYGVIATFQSFPSFGRVYAAYGGVFIIMSLIFAMVVDKQMPDKYDVIGAIICIVGVLVMLLPSRA.

The next 4 helical transmembrane spans lie at 5–25 (IFIF…IWLW), 31–51 (SSLV…IATF), 60–80 (VYAA…MVVD), and 86–106 (KYDV…LLPS).

This sequence belongs to the UPF0060 family.

The protein resides in the cell membrane. In Staphylococcus aureus (strain MRSA252), this protein is UPF0060 membrane protein SAR2425.